Consider the following 210-residue polypeptide: 23.6 kDa heat shock protein, mitochondrial (210 aa).

A mitochondrion-targeting transit peptide spans 1 to 31 (MASALALKRLLSSSIAPRSRSVLRPAVSSRL). Positions 100 to 210 (MGASGARRGW…RNDVRQIEIN (111 aa)) constitute a sHSP domain. Residues 145–165 (GEGKNEEDGGEEGESGNRRFT) form a disordered region.

The protein belongs to the small heat shock protein (HSP20) family. As to quaternary structure, may form oligomeric structures.

It is found in the mitochondrion. This Arabidopsis thaliana (Mouse-ear cress) protein is 23.6 kDa heat shock protein, mitochondrial (HSP23.6).